The primary structure comprises 163 residues: Campylobacter invasion antigen D (163 aa).

Positions 135-145 match the MKD motif; that stretch reads KKDDLENRLNL.

As to quaternary structure, interacts with the host cell protein IQGAP1, thus displacing RACGAP1 from the IQGAP1 complex.

The protein localises to the secreted. Its subcellular location is the host cytoplasm. It is found in the host cytosol. Functionally, effector protein required for the development of acute disease and colon inflammatory lesions. Required for maximal host cell invasion and maximal secretion of the inflammatory chemokine interleukin-8 (IL-8) from host cells. Acts by activating the host MAP kinase signaling pathways ERK-1/2 and p38 to promote both cellular invasion and the release of IL-8. CiaD mediated activation of ERK-1/2 leads to the phosphorylation of host cortactin (CTTN) on serine residues and association of cortactin with N-WASP, promoting actin cytoskeleton rearrangement, membrane ruffling and host cell invasion. In addition, maximal host cell invasion requires interaction with the host cell protein IQGAP1, a Ras GTPase-activating-like protein. Binding to IQGAP1 facilitates the activation of the Rho GTPases RAC1 and CDC42, further promoting actin reorganization and bacterial uptake. CiaD promotes RAC1 activation by excluding RACGAP1 from the IQGAP1 complex, preventing the deactivation of RAC1. CiaD probably activates ERK signaling upstream or independently of IQGAP1. The polypeptide is Campylobacter invasion antigen D (Campylobacter jejuni subsp. jejuni serotype O:2 (strain ATCC 700819 / NCTC 11168)).